The chain runs to 371 residues: Choline kinase B1 (371 aa).

This sequence belongs to the choline/ethanolamine kinase family. The cofactor is Mg(2+).

It carries out the reaction choline + ATP = phosphocholine + ADP + H(+). The chain is Choline kinase B1 (ckb-1) from Caenorhabditis elegans.